A 303-amino-acid chain; its full sequence is NAD kinase (303 aa).

The active-site Proton acceptor is the aspartate 85. Residues 85–86 (DG), 159–160 (ND), arginine 187, aspartate 189, 200–205 (TAYALS), alanine 224, and glutamine 258 contribute to the NAD(+) site.

This sequence belongs to the NAD kinase family. A divalent metal cation is required as a cofactor.

The protein resides in the cytoplasm. The enzyme catalyses NAD(+) + ATP = ADP + NADP(+) + H(+). Involved in the regulation of the intracellular balance of NAD and NADP, and is a key enzyme in the biosynthesis of NADP. Catalyzes specifically the phosphorylation on 2'-hydroxyl of the adenosine moiety of NAD to yield NADP. The polypeptide is NAD kinase (Variovorax paradoxus (strain S110)).